We begin with the raw amino-acid sequence, 197 residues long: Small ribosomal subunit protein uS4B (197 aa).

Residues 88-151 (CRLDNIAYRI…RKNDEFADNF (64 aa)) enclose the S4 RNA-binding domain.

Belongs to the universal ribosomal protein uS4 family. Part of the 30S ribosomal subunit. Contacts protein S5. The interaction surface between S4 and S5 is involved in control of translational fidelity.

One of the primary rRNA binding proteins, it binds directly to 16S rRNA where it nucleates assembly of the body of the 30S subunit. Its function is as follows. With S5 and S12 plays an important role in translational accuracy. In Clostridium botulinum (strain Hall / ATCC 3502 / NCTC 13319 / Type A), this protein is Small ribosomal subunit protein uS4B.